The sequence spans 158 residues: Cyclic pyranopterin monophosphate synthase (158 aa).

Residues 75-77 (LCH) and 113-114 (ME) contribute to the substrate site. Residue Asp-128 is part of the active site.

The protein belongs to the MoaC family. Homohexamer; trimer of dimers.

The enzyme catalyses (8S)-3',8-cyclo-7,8-dihydroguanosine 5'-triphosphate = cyclic pyranopterin phosphate + diphosphate. It participates in cofactor biosynthesis; molybdopterin biosynthesis. Its function is as follows. Catalyzes the conversion of (8S)-3',8-cyclo-7,8-dihydroguanosine 5'-triphosphate to cyclic pyranopterin monophosphate (cPMP). The polypeptide is Cyclic pyranopterin monophosphate synthase (Roseiflexus castenholzii (strain DSM 13941 / HLO8)).